We begin with the raw amino-acid sequence, 111 residues long: MAGRSAVSASSKWLDGFRKWYYNAAGFNKLGLMRDDTLHETEDVKEAIRRLPEDLYNDRMLRIKRALDLTMRHQILPKDQWTKYEEDKFYLEPYLKEVIRERKEREEWAKK.

Position 2 is an N-acetylalanine (Ala2). Lys12 bears the N6-acetyllysine; alternate mark. At Lys12 the chain carries N6-succinyllysine; alternate. Lys19 is subject to N6-acetyllysine. Residue Lys78 is modified to N6-acetyllysine; alternate. Lys78 bears the N6-succinyllysine; alternate mark. Lys83 is subject to N6-acetyllysine. Lys88 bears the N6-acetyllysine; alternate mark. Lys88 carries the N6-succinyllysine; alternate modification. Position 96 is an N6-acetyllysine (Lys96).

This sequence belongs to the UQCRB/QCR7 family. As to quaternary structure, component of the ubiquinol-cytochrome c oxidoreductase (cytochrome b-c1 complex, complex III, CIII), a multisubunit enzyme composed of 11 subunits. The complex is composed of 3 respiratory subunits cytochrome b, cytochrome c1 and Rieske protein UQCRFS1, 2 core protein subunits UQCRC1/QCR1 and UQCRC2/QCR2, and 6 low-molecular weight protein subunits UQCRH/QCR6, UQCRB/QCR7, UQCRQ/QCR8, UQCR10/QCR9, UQCR11/QCR10 and subunit 9, the cleavage product of Rieske protein UQCRFS1. The complex exists as an obligatory dimer and forms supercomplexes (SCs) in the inner mitochondrial membrane with NADH-ubiquinone oxidoreductase (complex I, CI) and cytochrome c oxidase (complex IV, CIV), resulting in different assemblies (supercomplex SCI(1)III(2)IV(1) and megacomplex MCI(2)III(2)IV(2)).

The protein resides in the mitochondrion inner membrane. Its function is as follows. Component of the ubiquinol-cytochrome c oxidoreductase, a multisubunit transmembrane complex that is part of the mitochondrial electron transport chain which drives oxidative phosphorylation. The respiratory chain contains 3 multisubunit complexes succinate dehydrogenase (complex II, CII), ubiquinol-cytochrome c oxidoreductase (cytochrome b-c1 complex, complex III, CIII) and cytochrome c oxidase (complex IV, CIV), that cooperate to transfer electrons derived from NADH and succinate to molecular oxygen, creating an electrochemical gradient over the inner membrane that drives transmembrane transport and the ATP synthase. The cytochrome b-c1 complex catalyzes electron transfer from ubiquinol to cytochrome c, linking this redox reaction to translocation of protons across the mitochondrial inner membrane, with protons being carried across the membrane as hydrogens on the quinol. In the process called Q cycle, 2 protons are consumed from the matrix, 4 protons are released into the intermembrane space and 2 electrons are passed to cytochrome c. The sequence is that of Cytochrome b-c1 complex subunit 7 (Uqcrb) from Mus musculus (Mouse).